Reading from the N-terminus, the 473-residue chain is 3-isopropylmalate dehydratase large subunit (473 aa).

[4Fe-4S] cluster contacts are provided by Cys-354, Cys-414, and Cys-417. The segment at 425–448 is disordered; the sequence is LAPGQRSASTSNRNFEGRQGRGGR.

This sequence belongs to the aconitase/IPM isomerase family. LeuC type 1 subfamily. Heterodimer of LeuC and LeuD. It depends on [4Fe-4S] cluster as a cofactor.

It catalyses the reaction (2R,3S)-3-isopropylmalate = (2S)-2-isopropylmalate. Its pathway is amino-acid biosynthesis; L-leucine biosynthesis; L-leucine from 3-methyl-2-oxobutanoate: step 2/4. In terms of biological role, catalyzes the isomerization between 2-isopropylmalate and 3-isopropylmalate, via the formation of 2-isopropylmaleate. This is 3-isopropylmalate dehydratase large subunit from Acidothermus cellulolyticus (strain ATCC 43068 / DSM 8971 / 11B).